Consider the following 780-residue polypeptide: Protein phosphatase 1 regulatory subunit 21 (780 aa).

2 coiled-coil regions span residues 1-209 (MASA…NLHE) and 556-605 (ESRE…DRLR). The interval 84-104 (EPRGKKNKKSGESSSQLSQEQ) is disordered. Over residues 95 to 104 (ESSSQLSQEQ) the composition is skewed to low complexity. At Thr-652 the chain carries Phosphothreonine. Residues 694 to 742 (AECRALSKRLALAEKSKETLTEEMRLASQNISRLQDELMTTKRSYEDQL) adopt a coiled-coil conformation.

Component of the FERRY complex, composed of five subunits: TBCK, PPP1R21, FERRY3, CRYZL1 and GATAD1, with a ratio of 1:2:1:2:4 respectively. PPP1R21 serves as a binding hub connecting all five complex subunits to mediate the binding to specific mitochondrial mRNAs. Interacts with the GTP-bound form of RAB5A (via its C-terminal region); linking the mRNP complex onto trafficking endosomes for active mRNA transport. Interacts with PPP1CA. As to expression, expressed at 16 dpc in the cortex (at protein level).

It is found in the early endosome. Functionally, component of the FERRY complex (Five-subunit Endosomal Rab5 and RNA/ribosome intermediary). The FERRY complex directly interacts with mRNAs and RAB5A, and functions as a RAB5A effector involved in the localization and the distribution of specific mRNAs most likely by mediating their endosomal transport. The complex recruits mRNAs and ribosomes to early endosomes through direct mRNA-interaction. In the complex, PPP1R21 serves as a binding hub connecting all five complex subunits and mediating the binding to mRNA and early endosomes via RAB5A. Putative regulator of protein phosphatase 1 (PP1) activity. May play a role in the endosomal sorting process or in endosome maturation pathway. This chain is Protein phosphatase 1 regulatory subunit 21 (Ppp1r21), found in Mus musculus (Mouse).